An 839-amino-acid chain; its full sequence is LPS-assembly protein LptD (839 aa).

Residues 1-21 form the signal peptide; sequence MAIGITACVLSLINYQGLAYS.

It belongs to the LptD family. In terms of assembly, component of the lipopolysaccharide transport and assembly complex. Interacts with LptE and LptA.

It localises to the cell outer membrane. Functionally, together with LptE, is involved in the assembly of lipopolysaccharide (LPS) at the surface of the outer membrane. This is LPS-assembly protein LptD from Legionella pneumophila (strain Lens).